Consider the following 253-residue polypeptide: Sulfate transporter CysZ (253 aa).

The next 4 membrane-spanning stretches (helical) occupy residues 31 to 51, 75 to 95, 151 to 171, and 222 to 242; these read FVILPLLVNILLMGGAFWWLF, LLWPLAVISVLLVFGYFFSTI, IVLLILYFIPGIGQTVAPVLW, and IPLLNLFIMPVAVCGATAMWV.

Belongs to the CysZ family.

The protein localises to the cell inner membrane. Its function is as follows. High affinity, high specificity proton-dependent sulfate transporter, which mediates sulfate uptake. Provides the sulfur source for the cysteine synthesis pathway. The protein is Sulfate transporter CysZ of Shigella dysenteriae serotype 1 (strain Sd197).